The sequence spans 221 residues: Large ribosomal subunit protein uL3 (221 aa).

Belongs to the universal ribosomal protein uL3 family. In terms of assembly, part of the 50S ribosomal subunit. Forms a cluster with proteins L14 and L19.

Its function is as follows. One of the primary rRNA binding proteins, it binds directly near the 3'-end of the 23S rRNA, where it nucleates assembly of the 50S subunit. The protein is Large ribosomal subunit protein uL3 of Chlamydia muridarum (strain MoPn / Nigg).